A 458-amino-acid polypeptide reads, in one-letter code: UDP-N-acetylmuramate--L-alanine ligase (458 aa).

118-124 (GTHGKTT) contacts ATP.

Belongs to the MurCDEF family.

Its subcellular location is the cytoplasm. It carries out the reaction UDP-N-acetyl-alpha-D-muramate + L-alanine + ATP = UDP-N-acetyl-alpha-D-muramoyl-L-alanine + ADP + phosphate + H(+). Its pathway is cell wall biogenesis; peptidoglycan biosynthesis. Its function is as follows. Cell wall formation. The protein is UDP-N-acetylmuramate--L-alanine ligase of Clostridium botulinum (strain Kyoto / Type A2).